The chain runs to 63 residues: NSVNPCCDPQTCKPIEGKHCISGPCCENCYFLRSGTICQRARGDGNNDYCTGITPDCPRNRYN.

The Disintegrin domain maps to 1-63 (NSVNPCCDPQ…TPDCPRNRYN (63 aa)). Intrachain disulfides connect Cys-6–Cys-29, Cys-20–Cys-26, Cys-25–Cys-50, and Cys-38–Cys-57. The Cell attachment site motif lies at 42–44 (RGD).

The protein belongs to the disintegrin family. Dimeric disintegrin subfamily. As to quaternary structure, heterodimer with subunit A; disulfide-linked. Expressed by the venom gland.

The protein localises to the secreted. In terms of biological role, may bind to both alpha-IIb/beta-3 (ITGA2B/ITGB3) and alpha-V/beta-3 (ITGAV/ITGB3) integrins, and may inhibit platelet aggregation. The polypeptide is Disintegrin schistatin-like subunit B (Echis carinatus (Saw-scaled viper)).